Consider the following 210-residue polypeptide: Hypoxanthine-guanine phosphoribosyltransferase (210 aa).

Residues Lys-54, 113 to 121 (EDILDTALT), Lys-145, and Asp-173 contribute to the GMP site. Residue Asp-117 is the Proton acceptor of the active site. Asp-173 is a binding site for Mg(2+).

This sequence belongs to the purine/pyrimidine phosphoribosyltransferase family. The cofactor is Mg(2+).

The protein resides in the cytoplasm. It catalyses the reaction IMP + diphosphate = hypoxanthine + 5-phospho-alpha-D-ribose 1-diphosphate. The enzyme catalyses GMP + diphosphate = guanine + 5-phospho-alpha-D-ribose 1-diphosphate. The protein operates within purine metabolism; IMP biosynthesis via salvage pathway; IMP from hypoxanthine: step 1/1. Its function is as follows. Converts guanine to guanosine monophosphate, and hypoxanthine to inosine monophosphate. Transfers the 5-phosphoribosyl group from 5-phosphoribosylpyrophosphate onto the purine. Plays a central role in the generation of purine nucleotides through the purine salvage pathway. In Trypanosoma brucei brucei, this protein is Hypoxanthine-guanine phosphoribosyltransferase (HGPRT).